The primary structure comprises 156 residues: Cyanate hydratase (156 aa).

Catalysis depends on residues R96, E99, and S122.

It belongs to the cyanase family.

It carries out the reaction cyanate + hydrogencarbonate + 3 H(+) = NH4(+) + 2 CO2. Its function is as follows. Catalyzes the reaction of cyanate with bicarbonate to produce ammonia and carbon dioxide. The protein is Cyanate hydratase of Burkholderia cenocepacia (strain ATCC BAA-245 / DSM 16553 / LMG 16656 / NCTC 13227 / J2315 / CF5610) (Burkholderia cepacia (strain J2315)).